The chain runs to 303 residues: Crk-like protein (303 aa).

The SH2 domain maps to 14-102; sequence WYMGPVTRQE…LDTTTLIEPA (89 aa). The region spanning 123–183 is the SH3 1 domain; it reads ENLEYVRTLY…PVPYVEKLVR (61 aa). A Phosphotyrosine modification is found at tyrosine 127. The segment at 184–203 is disordered; the sequence is SSPHGKHGNRNSNSYGIPEP. Residue tyrosine 207 is modified to Phosphotyrosine. The SH3 2 domain maps to 235–296; the sequence is NGPVFAKAIQ…PFTHVKIFDP (62 aa).

Belongs to the CRK family. Interacts with DOCK2 and EPOR. Interacts with phosphorylated CBLB and IRS4. Interacts with INPP5D/SHIP1. Interacts with BCAR1/CAS and NEDD9/HEF1. Phosphorylated on tyrosine. Phosphorylation is prominent during early development, but decreases at later embryonic stages and in newborn mice.

May mediate the transduction of intracellular signals. The polypeptide is Crk-like protein (Crkl) (Mus musculus (Mouse)).